A 740-amino-acid chain; its full sequence is Phosphoribosylformylglycinamidine synthase subunit PurL (740 aa).

The active site involves histidine 50. ATP is bound by residues tyrosine 53 and lysine 92. Glutamate 94 serves as a coordination point for Mg(2+). Substrate is bound by residues 95–98 (SHNH) and arginine 117. Histidine 96 functions as the Proton acceptor in the catalytic mechanism. Aspartate 118 is a Mg(2+) binding site. Glutamine 241 is a binding site for substrate. Position 269 (aspartate 269) interacts with Mg(2+). 313-315 (ESQ) lines the substrate pocket. Residues aspartate 495 and glycine 532 each coordinate ATP. A Mg(2+)-binding site is contributed by asparagine 533. A substrate-binding site is contributed by serine 535.

Belongs to the FGAMS family. As to quaternary structure, monomer. Part of the FGAM synthase complex composed of 1 PurL, 1 PurQ and 2 PurS subunits.

It is found in the cytoplasm. The enzyme catalyses N(2)-formyl-N(1)-(5-phospho-beta-D-ribosyl)glycinamide + L-glutamine + ATP + H2O = 2-formamido-N(1)-(5-O-phospho-beta-D-ribosyl)acetamidine + L-glutamate + ADP + phosphate + H(+). It participates in purine metabolism; IMP biosynthesis via de novo pathway; 5-amino-1-(5-phospho-D-ribosyl)imidazole from N(2)-formyl-N(1)-(5-phospho-D-ribosyl)glycinamide: step 1/2. Functionally, part of the phosphoribosylformylglycinamidine synthase complex involved in the purines biosynthetic pathway. Catalyzes the ATP-dependent conversion of formylglycinamide ribonucleotide (FGAR) and glutamine to yield formylglycinamidine ribonucleotide (FGAM) and glutamate. The FGAM synthase complex is composed of three subunits. PurQ produces an ammonia molecule by converting glutamine to glutamate. PurL transfers the ammonia molecule to FGAR to form FGAM in an ATP-dependent manner. PurS interacts with PurQ and PurL and is thought to assist in the transfer of the ammonia molecule from PurQ to PurL. The chain is Phosphoribosylformylglycinamidine synthase subunit PurL from Brucella canis (strain ATCC 23365 / NCTC 10854 / RM-666).